A 209-amino-acid chain; its full sequence is Cytidylyl-2-hydroxypropylphosphonate hydrolase (209 aa).

Residues asparagine 111, aspartate 127, glutamate 129, and aspartate 131 each contribute to the a divalent metal cation site. Lysine 144 (proton donor) is an active-site residue. Aspartate 145 provides a ligand contact to a divalent metal cation.

This sequence belongs to the FomD family. In terms of assembly, monomer in solution. It depends on Mn(2+) as a cofactor. Co(2+) serves as cofactor.

The catalysed reaction is cytidine 5'-({hydroxy[(S)-2-hydroxypropyl]phosphonoyl}phosphate) + H2O = (S)-2-hydroxypropylphosphonate + CMP + H(+). It participates in antibiotic biosynthesis; fosfomycin biosynthesis. Hydrolysis of (S)-HPP-CMP is inhibited by CDP. Involved in fosfomycin biosynthesis. Catalyzes the hydrolysis of cytidylyl (S)-2-hydroxypropylphosphonate ((S)-HPP-CMP) to give (S)-2-hydroxypropylphosphonate ((S)-HPP) and CMP. Can also hydrolyze (R)-HPP-CMP and cytidylyl 2-hydroxyethylphosphonate (HEP-CMP), which is a biosynthetic intermediate before C-methylation, but the catalytic efficiency is much higher with (S)-HPP-CMP. The protein is Cytidylyl-2-hydroxypropylphosphonate hydrolase of Streptomyces wedmorensis.